The following is a 159-amino-acid chain: 2-C-methyl-D-erythritol 2,4-cyclodiphosphate synthase (159 aa).

Positions 8 and 10 each coordinate a divalent metal cation. Residues 8-10 (DVH) and 34-35 (HS) contribute to the 4-CDP-2-C-methyl-D-erythritol 2-phosphate site. H42 lines the a divalent metal cation pocket. Residues 56 to 58 (DIG), 61 to 65 (FPDTD), 100 to 106 (AQAPKML), 132 to 135 (TTTE), F139, and R142 each bind 4-CDP-2-C-methyl-D-erythritol 2-phosphate.

The protein belongs to the IspF family. In terms of assembly, homotrimer. It depends on a divalent metal cation as a cofactor.

The catalysed reaction is 4-CDP-2-C-methyl-D-erythritol 2-phosphate = 2-C-methyl-D-erythritol 2,4-cyclic diphosphate + CMP. It participates in isoprenoid biosynthesis; isopentenyl diphosphate biosynthesis via DXP pathway; isopentenyl diphosphate from 1-deoxy-D-xylulose 5-phosphate: step 4/6. Its function is as follows. Involved in the biosynthesis of isopentenyl diphosphate (IPP) and dimethylallyl diphosphate (DMAPP), two major building blocks of isoprenoid compounds. Catalyzes the conversion of 4-diphosphocytidyl-2-C-methyl-D-erythritol 2-phosphate (CDP-ME2P) to 2-C-methyl-D-erythritol 2,4-cyclodiphosphate (ME-CPP) with a corresponding release of cytidine 5-monophosphate (CMP). This chain is 2-C-methyl-D-erythritol 2,4-cyclodiphosphate synthase, found in Escherichia coli O81 (strain ED1a).